The chain runs to 723 residues: Protein Hook homolog (723 aa).

One can recognise a Calponin-homology (CH) domain in the interval 4–120 (TELCECLVQW…RLLQLILGCA (117 aa)). 2 coiled-coil regions span residues 162-423 (VLPE…MQLQ) and 457-665 (EIKE…IVSA). The interval 682-723 (LANGGPMQGGQSFLARQRQATSRRTTVSTTHPGHARSVNFVN) is disordered. Low complexity predominate over residues 696–711 (ARQRQATSRRTTVSTT).

It belongs to the hook family. In terms of assembly, interacts with microtubules.

The protein resides in the cytoplasm. The protein localises to the cytoskeleton. Its function is as follows. May function to promote vesicle trafficking and/or fusion. May act to link a number of membrane-bound organelles to the cytoskeleton. The protein is Protein Hook homolog of Branchiostoma floridae (Florida lancelet).